The primary structure comprises 291 residues: Ribosomal RNA small subunit methyltransferase A (291 aa).

S-adenosyl-L-methionine-binding residues include His-21, Leu-23, Gly-48, Glu-70, Asp-95, and Asn-115.

Belongs to the class I-like SAM-binding methyltransferase superfamily. rRNA adenine N(6)-methyltransferase family. RsmA subfamily.

The protein resides in the cytoplasm. It catalyses the reaction adenosine(1518)/adenosine(1519) in 16S rRNA + 4 S-adenosyl-L-methionine = N(6)-dimethyladenosine(1518)/N(6)-dimethyladenosine(1519) in 16S rRNA + 4 S-adenosyl-L-homocysteine + 4 H(+). Functionally, specifically dimethylates two adjacent adenosines (A1518 and A1519) in the loop of a conserved hairpin near the 3'-end of 16S rRNA in the 30S particle. May play a critical role in biogenesis of 30S subunits. This Prochlorococcus marinus (strain NATL2A) protein is Ribosomal RNA small subunit methyltransferase A.